Reading from the N-terminus, the 266-residue chain is Glucosamine-6-phosphate deaminase (266 aa).

The active-site Proton acceptor; for enolization step is the D72. D141 acts as the For ring-opening step in catalysis. H143 functions as the Proton acceptor; for ring-opening step in the catalytic mechanism. E148 (for ring-opening step) is an active-site residue.

The protein belongs to the glucosamine/galactosamine-6-phosphate isomerase family. NagB subfamily. As to quaternary structure, homohexamer.

The catalysed reaction is alpha-D-glucosamine 6-phosphate + H2O = beta-D-fructose 6-phosphate + NH4(+). The protein operates within amino-sugar metabolism; N-acetylneuraminate degradation; D-fructose 6-phosphate from N-acetylneuraminate: step 5/5. With respect to regulation, allosterically activated by N-acetylglucosamine 6-phosphate (GlcNAc6P). In terms of biological role, catalyzes the reversible isomerization-deamination of glucosamine 6-phosphate (GlcN6P) to form fructose 6-phosphate (Fru6P) and ammonium ion. The polypeptide is Glucosamine-6-phosphate deaminase (Yersinia enterocolitica serotype O:8 / biotype 1B (strain NCTC 13174 / 8081)).